We begin with the raw amino-acid sequence, 585 residues long: Arginine--tRNA ligase (585 aa).

Residues Ala-131 to His-141 carry the 'HIGH' region motif.

It belongs to the class-I aminoacyl-tRNA synthetase family. In terms of assembly, monomer.

It is found in the cytoplasm. It carries out the reaction tRNA(Arg) + L-arginine + ATP = L-arginyl-tRNA(Arg) + AMP + diphosphate. This chain is Arginine--tRNA ligase, found in Brucella suis (strain ATCC 23445 / NCTC 10510).